The chain runs to 219 residues: Protein-L-isoaspartate O-methyltransferase (219 aa).

Serine 66 is an active-site residue.

It belongs to the methyltransferase superfamily. L-isoaspartyl/D-aspartyl protein methyltransferase family.

It localises to the cytoplasm. The catalysed reaction is [protein]-L-isoaspartate + S-adenosyl-L-methionine = [protein]-L-isoaspartate alpha-methyl ester + S-adenosyl-L-homocysteine. In terms of biological role, catalyzes the methyl esterification of L-isoaspartyl residues in peptides and proteins that result from spontaneous decomposition of normal L-aspartyl and L-asparaginyl residues. It plays a role in the repair and/or degradation of damaged proteins. The sequence is that of Protein-L-isoaspartate O-methyltransferase from Xanthobacter autotrophicus (strain ATCC BAA-1158 / Py2).